The sequence spans 66 residues: uncharacterized protein (66 aa).

The signal sequence occupies residues 1–25 (MIVIILLFISIIVFLSVIQPQPSKN). The segment covering 21-31 (QPSKNKSRQQA) has biased composition (polar residues). The tract at residues 21-66 (QPSKNKSRQQADSGYFGYSDHSSHHDGCSSDGGFSDSGCGGGGGGD) is disordered.

This is an uncharacterized protein from Bacillus subtilis (strain 168).